An 801-amino-acid chain; its full sequence is Palmitoyl thioesterase CPT1C (801 aa).

The Cytoplasmic portion of the chain corresponds to 1 to 49 (MAEAHQASSLLSSLSSDGAEVELSSSVWQEIYLSALRSWKRNLWRVWND). A helical transmembrane segment spans residues 50 to 70 (FLAGVVPATPLSWLFLFSTIQ). Topologically, residues 71–103 (LACLLQLDPSLGLMEKIKELLPDWGGQHHQLQG) are mitochondrial intermembrane. A helical transmembrane segment spans residues 104–124 (LLAAAVFASCLWGTLIFTLHV). The Cytoplasmic segment spans residues 125-801 (ALRLLLSHHG…PNIPKSSTNL (677 aa)). The active-site Proton acceptor is histidine 469. 551 to 563 (GKSFIKGCHVSSD) is a CoA binding site. (R)-carnitine is bound by residues tyrosine 585, serine 587, and threonine 598. Positions 760 to 801 (LFQAGQQFKRQFTGLGESSGWKYSNLSCKTVDPNIPKSSTNL) are required for interaction with GRIA1.

This sequence belongs to the carnitine/choline acetyltransferase family. In terms of assembly, peripherally associated with AMPAR complex. AMPAR complex consists of an inner core made of 4 pore-forming GluA/GRIA proteins (GRIA1, GRIA2, GRIA3 and GRIA4) and 4 major auxiliary subunits arranged in a twofold symmetry. One of the two pairs of distinct binding sites is occupied either by CNIH2, CNIH3 or CACNG2, CACNG3. The other harbors CACNG2, CACNG3, CACNG4, CACNG8 or GSG1L. This inner core of AMPAR complex is complemented by outer core constituents binding directly to the GluA/GRIA proteins at sites distinct from the interaction sites of the inner core constituents. Outer core constituents include at least PRRT1, PRRT2, CKAMP44/SHISA9, FRRS1L and NRN1. The proteins of the inner and outer core serve as a platform for other, more peripherally associated AMPAR constituents, including CPT1C. Alone or in combination, these auxiliary subunits control the gating and pharmacology of the AMPAR complex and profoundly impact their biogenesis and protein processing. Interacts with SACM1L; the interaction regulates SACM1L phosphatidylinositol-3-phosphatase activity and translocation to endoplasmic reticulum/trans Golgi network in a malonyl-CoA dependent manner. Interacts with ATL1. Expressed in brain (at protein level).

The protein localises to the synapse. It is found in the cell projection. The protein resides in the dendrite. It localises to the axon. Its subcellular location is the endoplasmic reticulum membrane. It catalyses the reaction S-hexadecanoyl-L-cysteinyl-[protein] + H2O = L-cysteinyl-[protein] + hexadecanoate + H(+). Functionally, palmitoyl thioesterase specifically expressed in the endoplasmic reticulum of neurons. Modulates the trafficking of the glutamate receptor, AMPAR, to plasma membrane through depalmitoylation of GRIA1. Also regulates AMPR trafficking through the regulation of SACM1L phosphatidylinositol-3-phosphatase activity by interaction in a malonyl-CoA dependent manner. Binds malonyl-CoA and couples malonyl-CoA to ceramide levels, necessary for proper spine maturation and contributing to systemic energy homeostasis and appetite control. Binds to palmitoyl-CoA, but does not have carnitine palmitoyltransferase 1 catalytic activity or at very low levels. This chain is Palmitoyl thioesterase CPT1C (Cpt1c), found in Rattus norvegicus (Rat).